A 98-amino-acid chain; its full sequence is MSLVHINILMAFIMSLTGLLMYRSHLMSALLCLEGMMLSLFVLATLTILNSHFTLANMMPIILLVFAACEAAIGLALLVMISNTYGTDYVQNLNLLQC.

3 consecutive transmembrane segments (helical) span residues 1-21 (MSLV…GLLM), 29-49 (ALLC…LTIL), and 61-81 (IILL…LVMI).

Belongs to the complex I subunit 4L family. As to quaternary structure, core subunit of respiratory chain NADH dehydrogenase (Complex I) which is composed of 45 different subunits.

The protein resides in the mitochondrion inner membrane. It catalyses the reaction a ubiquinone + NADH + 5 H(+)(in) = a ubiquinol + NAD(+) + 4 H(+)(out). In terms of biological role, core subunit of the mitochondrial membrane respiratory chain NADH dehydrogenase (Complex I) which catalyzes electron transfer from NADH through the respiratory chain, using ubiquinone as an electron acceptor. Part of the enzyme membrane arm which is embedded in the lipid bilayer and involved in proton translocation. The chain is NADH-ubiquinone oxidoreductase chain 4L (MT-ND4L) from Delphinapterus leucas (Beluga whale).